Consider the following 419-residue polypeptide: Gamma-glutamyl phosphate reductase (419 aa).

Belongs to the gamma-glutamyl phosphate reductase family.

The protein localises to the cytoplasm. The catalysed reaction is L-glutamate 5-semialdehyde + phosphate + NADP(+) = L-glutamyl 5-phosphate + NADPH + H(+). It participates in amino-acid biosynthesis; L-proline biosynthesis; L-glutamate 5-semialdehyde from L-glutamate: step 2/2. Catalyzes the NADPH-dependent reduction of L-glutamate 5-phosphate into L-glutamate 5-semialdehyde and phosphate. The product spontaneously undergoes cyclization to form 1-pyrroline-5-carboxylate. The polypeptide is Gamma-glutamyl phosphate reductase (Bordetella parapertussis (strain 12822 / ATCC BAA-587 / NCTC 13253)).